A 440-amino-acid chain; its full sequence is Streptokinase C (440 aa).

The N-terminal stretch at 1–26 (MKNYLSFGMFALLFALTFGTVNSVQA) is a signal peptide.

This protein is not a protease, but it activates plasminogen by complexing with it. As a potential virulence factor, it is thought to prevent the formation of effective fibrin barriers around the site of infection, thereby contributing to the invasiveness of the cells. This chain is Streptokinase C (skc), found in Streptococcus dysgalactiae subsp. equisimilis (Streptococcus equisimilis).